A 334-amino-acid chain; its full sequence is Cytoskeleton protein RodZ (334 aa).

The Cytoplasmic segment spans residues 1–111; that stretch reads MNTEATHDQN…LGKRRKKRDG (111 aa). The HTH cro/C1-type domain occupies 19 to 71; that stretch reads LRNAREQLGLSQQAVAERLCLKVSTVRDIEEDKAPSDLASTFLRGYIRSYARL. Residues 30-49 constitute a DNA-binding region (H-T-H motif); sequence QQAVAERLCLKVSTVRDIEE. The chain crosses the membrane as a helical; Signal-anchor for type II membrane protein span at residues 112–132; the sequence is WLMSFTWLVLFVVVGLTGAWW. At 133–334 the chain is on the periplasmic side; the sequence is WQNHKAQQEE…TLNAEPTPAQ (202 aa). 2 disordered regions span residues 155–207 and 221–241; these read NADK…ATQN and ATSA…SQAG. The segment covering 176–207 has biased composition (low complexity); the sequence is TTPAQTAPAPATPVDSTAATQTPAATATATQN.

Belongs to the RodZ family.

Its subcellular location is the cell inner membrane. Its function is as follows. Cytoskeletal protein that is involved in cell-shape control through regulation of the length of the long axis. The sequence is that of Cytoskeleton protein RodZ from Salmonella schwarzengrund (strain CVM19633).